We begin with the raw amino-acid sequence, 76 residues long: Bomanin Tailed 2 (76 aa).

The N-terminal stretch at 1 to 22 (MKALQVAGTLMLLFCLLAAVNA) is a signal peptide. Positions 23–24 (TP) are cleaved as a propeptide — removed by a dipeptidylpeptidase. C33 and C36 are disulfide-bonded.

This sequence belongs to the bomanin family.

The protein localises to the secreted. Its function is as follows. Secreted immune-induced peptide induced by Toll signaling. Has a role in resistance to bacterial and fungal infections. The strength of antimicrobial activity appears to correlate with the overall level of expression. This chain is Bomanin Tailed 2, found in Drosophila melanogaster (Fruit fly).